The sequence spans 218 residues: MQNQLVVKRLGRRDYLPVWQAMHEFTDTRNEETPDEVWLVEHNPVFTQGQAGKAEHLLNTGDIPVVQSDRGGQVTYHGPGQLVAYFLINLRRKKLGVRDLVTTIENLVINTLKAYNIDSAARPDAPGVYVEGRKICSLGLRIRKGCSFHGLALNVNMDLSPFLRINPCGYQGMEMVQVSELGGPTDIALVEQQLVKELVNLLGYEQVEFSTEAEVREA.

Residues 31–206 (EETPDEVWLV…ELVNLLGYEQ (176 aa)) form the BPL/LPL catalytic domain. Substrate-binding positions include 70 to 77 (RGGQVTYH), 137 to 139 (SLG), and 150 to 152 (GLA). Cysteine 168 (acyl-thioester intermediate) is an active-site residue.

It belongs to the LipB family.

The protein localises to the cytoplasm. It carries out the reaction octanoyl-[ACP] + L-lysyl-[protein] = N(6)-octanoyl-L-lysyl-[protein] + holo-[ACP] + H(+). The protein operates within protein modification; protein lipoylation via endogenous pathway; protein N(6)-(lipoyl)lysine from octanoyl-[acyl-carrier-protein]: step 1/2. Functionally, catalyzes the transfer of endogenously produced octanoic acid from octanoyl-acyl-carrier-protein onto the lipoyl domains of lipoate-dependent enzymes. Lipoyl-ACP can also act as a substrate although octanoyl-ACP is likely to be the physiological substrate. In Vibrio vulnificus (strain YJ016), this protein is Octanoyltransferase.